The sequence spans 383 residues: Chromatin structure-remodeling complex subunit SFH1 (383 aa).

The disordered stretch occupies residues 61–80 (DDDEKVHSDNGKGEGEEVGH). Positions 64–80 (EKVHSDNGKGEGEEVGH) are enriched in basic and acidic residues.

The protein belongs to the SNF5 family.

The protein resides in the nucleus. Its function is as follows. Part of the chromatin structure-remodeling complex (RSC) which is involved in transcription regulation and nucleosome positioning. RSC is responsible for the transfer of a histone octamer from a nucleosome core particle to naked DNA. The reaction requires ATP and involves an activated RSC-nucleosome intermediate. Remodeling reaction also involves DNA translocation, DNA twist and conformational change. As a reconfigurer of centromeric and flanking nucleosomes, RSC complex is required both for proper kinetochore function in chromosome segregation and, via a PKC1-dependent signaling pathway, for organization of the cellular cytoskeleton. This subunit is essential for mitotic growth and required for cell cycle progression. The chain is Chromatin structure-remodeling complex subunit SFH1 (SFH1) from Eremothecium gossypii (strain ATCC 10895 / CBS 109.51 / FGSC 9923 / NRRL Y-1056) (Yeast).